Here is a 200-residue protein sequence, read N- to C-terminus: Glycerol-3-phosphate acyltransferase (200 aa).

6 helical membrane passes run 9–29 (IIIG…AYFW), 54–74 (VPGM…VLLA), 81–101 (DIAV…PLWL), 112–132 (GAGA…LVWL), 140–160 (YVSL…ALLN), and 165–185 (YLIF…SNIG).

This sequence belongs to the PlsY family. As to quaternary structure, probably interacts with PlsX.

It localises to the cell membrane. It carries out the reaction an acyl phosphate + sn-glycerol 3-phosphate = a 1-acyl-sn-glycero-3-phosphate + phosphate. Its pathway is lipid metabolism; phospholipid metabolism. In terms of biological role, catalyzes the transfer of an acyl group from acyl-phosphate (acyl-PO(4)) to glycerol-3-phosphate (G3P) to form lysophosphatidic acid (LPA). This enzyme utilizes acyl-phosphate as fatty acyl donor, but not acyl-CoA or acyl-ACP. This is Glycerol-3-phosphate acyltransferase from Desulforamulus reducens (strain ATCC BAA-1160 / DSM 100696 / MI-1) (Desulfotomaculum reducens).